Consider the following 176-residue polypeptide: CDP-archaeol synthase (176 aa).

A run of 5 helical transmembrane segments spans residues 12 to 32 (FIYW…SPVL), 60 to 80 (GFYV…IILC), 85 to 105 (ILIG…GSFI), 118 to 138 (PIID…FLGI), and 141 to 161 (FISY…LHII).

The protein belongs to the CDP-archaeol synthase family. Mg(2+) is required as a cofactor.

It is found in the cell membrane. The enzyme catalyses 2,3-bis-O-(geranylgeranyl)-sn-glycerol 1-phosphate + CTP + H(+) = CDP-2,3-bis-O-(geranylgeranyl)-sn-glycerol + diphosphate. Its pathway is membrane lipid metabolism; glycerophospholipid metabolism. Functionally, catalyzes the formation of CDP-2,3-bis-(O-geranylgeranyl)-sn-glycerol (CDP-archaeol) from 2,3-bis-(O-geranylgeranyl)-sn-glycerol 1-phosphate (DGGGP) and CTP. This reaction is the third ether-bond-formation step in the biosynthesis of archaeal membrane lipids. This chain is CDP-archaeol synthase, found in Staphylothermus marinus (strain ATCC 43588 / DSM 3639 / JCM 9404 / F1).